A 231-amino-acid polypeptide reads, in one-letter code: UPF0653 protein C607.02c (231 aa).

4 disordered regions span residues 1-33 (MPTK…VDDN), 47-68 (YHES…KKDY), 93-132 (SFKS…ENFE), and 147-178 (IESR…APPE). Positions 9–27 (SVLEAERKKIGLDHAPKED) are enriched in basic and acidic residues. Basic residues-rich tracts occupy residues 53-67 (KEIK…KKKD) and 109-119 (EKKKIAKRKEK).

Belongs to the UPF0653 family.

It is found in the nucleus. The protein resides in the nucleolus. The chain is UPF0653 protein C607.02c from Schizosaccharomyces pombe (strain 972 / ATCC 24843) (Fission yeast).